The following is a 175-amino-acid chain: Large ribosomal subunit protein bL17 (175 aa).

The disordered stretch occupies residues 127–175 (GEAEAATKRAVKEDALKKDEAPAAESVEDAKPAEDAPAAEAADDKGKDA). Residues 131–147 (AATKRAVKEDALKKDEA) show a composition bias toward basic and acidic residues.

It belongs to the bacterial ribosomal protein bL17 family. Part of the 50S ribosomal subunit. Contacts protein L32.

The protein is Large ribosomal subunit protein bL17 of Streptomyces griseus subsp. griseus (strain JCM 4626 / CBS 651.72 / NBRC 13350 / KCC S-0626 / ISP 5235).